We begin with the raw amino-acid sequence, 216 residues long: Probable nicotinate-nucleotide adenylyltransferase (216 aa).

It belongs to the NadD family.

The enzyme catalyses nicotinate beta-D-ribonucleotide + ATP + H(+) = deamido-NAD(+) + diphosphate. The protein operates within cofactor biosynthesis; NAD(+) biosynthesis; deamido-NAD(+) from nicotinate D-ribonucleotide: step 1/1. Functionally, catalyzes the reversible adenylation of nicotinate mononucleotide (NaMN) to nicotinic acid adenine dinucleotide (NaAD). This Geobacillus kaustophilus (strain HTA426) protein is Probable nicotinate-nucleotide adenylyltransferase.